The chain runs to 288 residues: Syntaxin-1A (288 aa).

Topologically, residues 1 to 265 (MKDRTQELRT…KYQSKARRKK (265 aa)) are cytoplasmic. Ser-14, Ser-64, and Ser-95 each carry phosphoserine. A coiled-coil region spans residues 68-109 (DEKTKEELEELMSDIKKTANKVRSKLKSIEQSIEQEEGLNRS). A Phosphoserine; by DAPK1 modification is found at Ser-188. Residues 192 to 254 (LSEIETRHSE…ERAVSDTKKA (63 aa)) enclose the t-SNARE coiled-coil homology domain. Glycyl lysine isopeptide (Lys-Gly) (interchain with G-Cter in SUMO) cross-links involve residues Lys-252, Lys-253, and Lys-256. Residues 266-286 (IMIIICCVILGIVIASTVGGI) form a helical; Anchor for type IV membrane protein membrane-spanning segment. Residues 287–288 (FA) lie on the Extracellular side of the membrane.

It belongs to the syntaxin family. In terms of assembly, part of the SNARE core complex containing SNAP25, VAMP2 and STX1A; this complex constitutes the basic catalytic machinery of the complex neurotransmitter release apparatus. The SNARE complex interacts with CPLX1. Interacts with STXBP1. The interaction with STXBP1 promotes assembly of the SNARE complex. Interacts (via C-terminus) with KCNB1 (via C-terminus); the interaction increases in a calcium-dependent manner and induces a pore-independent enhancement of exocytosis in neuroendocrine cells, chromaffin cells, pancreatic beta cells and from the soma of dorsal root ganglia (DRG) neurons. Interacts with SYTL4. Interacts with STXBP6. Interacts with PLCL1 (via C2 domain). Interacts with OTOF. Interacts with LGI3. Interacts (via the H3 domain) with SLC6A4 (via the N-terminus); this interaction regulates SLC4A6 channel conductance in thalamocortical neurons. Interacts with SYT6 and SYT8; the interaction is Ca(2+)-dependent. Interacts with VAMP8. Interacts with SNAP23. Interacts with VAPA and SYBU. Interacts with PRRT2. Interacts with SEPT8. Interacts with STXBP5L. Interacts with synaptotagmin-1/SYT1. Interacts with SEPTIN5; in the cerebellar cortex. Interacts with SEPTIN4; in the striatum. Phosphorylated by CK2. Phosphorylation at Ser-188 by DAPK1 significantly decreases its interaction with STXBP1. Post-translationally, sumoylated, sumoylation is required for regulation of synaptic vesicle endocytosis. Highly expressed in embryonic spinal cord and ganglia and in adult cerebellum and cerebral cortex. In terms of tissue distribution, expressed in heart, liver, fat, skeletal muscle, kidney and brain.

It localises to the cytoplasmic vesicle. Its subcellular location is the secretory vesicle. The protein resides in the synaptic vesicle membrane. The protein localises to the synapse. It is found in the synaptosome. It localises to the cell membrane. Its subcellular location is the secreted. In terms of biological role, plays an essential role in hormone and neurotransmitter calcium-dependent exocytosis and endocytosis. Part of the SNARE (Soluble NSF Attachment Receptor) complex composed of SNAP25, STX1A and VAMP2 which mediates the fusion of synaptic vesicles with the presynaptic plasma membrane. STX1A and SNAP25 are localized on the plasma membrane while VAMP2 resides in synaptic vesicles. The pairing of the three SNAREs from the N-terminal SNARE motifs to the C-terminal anchors leads to the formation of the SNARE complex, which brings membranes into close proximity and results in final fusion. Participates in the calcium-dependent regulation of acrosomal exocytosis in sperm. Also plays an important role in the exocytosis of hormones such as insulin or glucagon-like peptide 1 (GLP-1). This chain is Syntaxin-1A (STX1A), found in Homo sapiens (Human).